The sequence spans 314 residues: DNA-directed RNA polymerase subunit alpha (314 aa).

The segment at 1-228 is alpha N-terminal domain (alpha-NTD); it reads MIEIEKPRIE…EHLNIFVGLT (228 aa). Positions 245–314 are alpha C-terminal domain (alpha-CTD); it reads KEKVLEMSIE…DLGLGLRKED (70 aa).

This sequence belongs to the RNA polymerase alpha chain family. In terms of assembly, homodimer. The RNAP catalytic core consists of 2 alpha, 1 beta, 1 beta' and 1 omega subunit. When a sigma factor is associated with the core the holoenzyme is formed, which can initiate transcription.

It carries out the reaction RNA(n) + a ribonucleoside 5'-triphosphate = RNA(n+1) + diphosphate. Its function is as follows. DNA-dependent RNA polymerase catalyzes the transcription of DNA into RNA using the four ribonucleoside triphosphates as substrates. The sequence is that of DNA-directed RNA polymerase subunit alpha from Staphylococcus aureus (strain bovine RF122 / ET3-1).